The sequence spans 518 residues: D-aminopeptidase (518 aa).

The active-site Nucleophile is S62. The active-site Proton donor/acceptor is the K65. The tract at residues 477 to 487 (QRSMDAPSPGE) is important for specificity. Position 481 (D481) interacts with substrate.

It belongs to the peptidase S12 family. Homodimer.

The catalysed reaction is Release of an N-terminal D-amino acid from a peptide, Xaa-|-Yaa-, in which Xaa is preferably D-Ala, D-Ser or D-Thr. D-amino acid amides and methyl esters also are hydrolyzed, as is glycine amide.. With respect to regulation, inhibited by beta-lactam compounds such as 6-aminopenicillic acid, 7-aminocephalosporanic acid, benzylpenicillin and ampicillin. Inhibited by p-chloromercuribenzoate. Hydrolyzes N-terminal residues in D-amino acid-containing peptides. This is D-aminopeptidase from Brucella ovis (strain ATCC 25840 / 63/290 / NCTC 10512).